Consider the following 143-residue polypeptide: Sperm mitochondrial-associated cysteine-rich protein (143 aa).

Phosphoserine is present on residues S37, S44, and S110. The segment at 101-143 is disordered; the sequence is CCSSENKTESDSDTSGQTLEKGSQSPQSPPGAQGNWNQKKSNK. Positions 113 to 126 are enriched in polar residues; it reads DTSGQTLEKGSQSP. S128 is subject to Phosphoserine. Residues 134–143 show a composition bias toward polar residues; sequence GNWNQKKSNK.

In terms of tissue distribution, testis. Is selectively expressed in the spermatids of seminiferous tubules.

It localises to the cytoplasm. It is found in the mitochondrion membrane. Involved in sperm motility. Its absence is associated with genetic background dependent male infertility. Infertility may be due to reduced sperm motility in the female reproductive tract and inability to penetrate the oocyte zona pellucida. This is Sperm mitochondrial-associated cysteine-rich protein (Smcp) from Mus musculus (Mouse).